The primary structure comprises 433 residues: MFVSPPPATSKNQVLQRRPLESTNSNHGFASSLQAIPENTMSGSDNASFQSLPLSMSSSQSTTSSRRENFVNAPPEYTDRARDEIKKRLLASSPSRRSHHSSSMHSASRRSSVAESGSLLSDNASSYQSSIFSAPSTVHTQLTNDSSFSEFPNHKLITRVSLDEALPKTFYDMYSPDILLADPSNILCNGRPKFTKRELLDWDLNDIRSLLIVEKLRPEWGNQLPEVITVGDNMPQFRLQLLPLYSSDETIIATLVHSDLYMEANLDYEFKLTSAKYTVATARKRHEHITGRNEAVMNLSKPEWRNIIENYLLNIAVEAQCRFDFKQRCSEYKKWKLQQSNLKRPDMPPPSIIPRKNSTETKSLLKKALLKNIQLKNPNNNLDELMMRSSAATNQQGKNKVSLSKEEKATIWSQCQAQVYQRLGLDWQPDSVS.

The tract at residues 1-117 is disordered; the sequence is MFVSPPPATS…SRRSSVAESG (117 aa). Residues 9-47 are compositionally biased toward polar residues; the sequence is TSKNQVLQRRPLESTNSNHGFASSLQAIPENTMSGSDNA. Low complexity predominate over residues 48-64; that stretch reads SFQSLPLSMSSSQSTTS. Positions 77–87 are enriched in basic and acidic residues; it reads YTDRARDEIKK.

To yeast STD1/MSN3.

The protein is Protein MTH1 (MTH1) of Saccharomyces cerevisiae (strain ATCC 204508 / S288c) (Baker's yeast).